The primary structure comprises 73 residues: DNA gyrase inhibitor YacG (73 aa).

Cysteine 14, cysteine 17, cysteine 30, and cysteine 34 together coordinate Zn(2+). The disordered stretch occupies residues 54–73 (AEQADDTAGPGAAEDDTDSH).

Belongs to the DNA gyrase inhibitor YacG family. Interacts with GyrB. Requires Zn(2+) as cofactor.

In terms of biological role, inhibits all the catalytic activities of DNA gyrase by preventing its interaction with DNA. Acts by binding directly to the C-terminal domain of GyrB, which probably disrupts DNA binding by the gyrase. The polypeptide is DNA gyrase inhibitor YacG (Hyphomonas neptunium (strain ATCC 15444)).